The primary structure comprises 137 residues: uncharacterized protein (137 aa).

A signal peptide spans 1-21; it reads MFNRRVLFLSVFSCAVFMLSG. Cys-22 carries N-palmitoyl cysteine lipidation. Cys-22 carries the S-diacylglycerol cysteine lipid modification.

Its subcellular location is the membrane. This is an uncharacterized protein from Escherichia coli (strain K12).